The sequence spans 441 residues: Mitochondrial distribution and morphology protein 12 (441 aa).

The SMP-LTD domain occupies 1-441; it reads MSIDIDWERA…VYPSFWTFLV (441 aa). Disordered regions lie at residues 68 to 89 and 183 to 289; these read DFYE…PMRE and RAVT…RMRE. Composition is skewed to polar residues over residues 226–245 and 253–263; these read SRPS…SVST and PSQTLLANNPG.

It belongs to the MDM12 family. In terms of assembly, component of the ER-mitochondria encounter structure (ERMES) or MDM complex, composed of MMM1, MDM10, MDM12 and MDM34. An MMM1 homodimer associates with one molecule of MDM12 on each side in a pairwise head-to-tail manner, and the SMP-LTD domains of MMM1 and MDM12 generate a continuous hydrophobic tunnel for phospholipid trafficking.

The protein localises to the mitochondrion outer membrane. It localises to the endoplasmic reticulum membrane. Its function is as follows. Component of the ERMES/MDM complex, which serves as a molecular tether to connect the endoplasmic reticulum (ER) and mitochondria. Components of this complex are involved in the control of mitochondrial shape and protein biogenesis, and function in nonvesicular lipid trafficking between the ER and mitochondria. MDM12 is required for the interaction of the ER-resident membrane protein MMM1 and the outer mitochondrial membrane-resident beta-barrel protein MDM10. The MDM12-MMM1 subcomplex functions in the major beta-barrel assembly pathway that is responsible for biogenesis of all mitochondrial outer membrane beta-barrel proteins, and acts in a late step after the SAM complex. The MDM10-MDM12-MMM1 subcomplex further acts in the TOM40-specific pathway after the action of the MDM12-MMM1 complex. Essential for establishing and maintaining the structure of mitochondria and maintenance of mtDNA nucleoids. This is Mitochondrial distribution and morphology protein 12 from Paracoccidioides lutzii (strain ATCC MYA-826 / Pb01) (Paracoccidioides brasiliensis).